Consider the following 343-residue polypeptide: 4-hydroxy-3-methylbut-2-enyl diphosphate reductase (343 aa).

Residue cysteine 18 coordinates [4Fe-4S] cluster. Positions 47 and 83 each coordinate (2E)-4-hydroxy-3-methylbut-2-enyl diphosphate. Positions 47 and 83 each coordinate dimethylallyl diphosphate. Isopentenyl diphosphate is bound by residues histidine 47 and histidine 83. Residue cysteine 105 participates in [4Fe-4S] cluster binding. Residue histidine 133 participates in (2E)-4-hydroxy-3-methylbut-2-enyl diphosphate binding. Histidine 133 serves as a coordination point for dimethylallyl diphosphate. Histidine 133 provides a ligand contact to isopentenyl diphosphate. Glutamate 135 (proton donor) is an active-site residue. Threonine 174 contributes to the (2E)-4-hydroxy-3-methylbut-2-enyl diphosphate binding site. Cysteine 204 is a binding site for [4Fe-4S] cluster. (2E)-4-hydroxy-3-methylbut-2-enyl diphosphate contacts are provided by serine 232, serine 233, asparagine 234, and serine 277. Serine 232, serine 233, asparagine 234, and serine 277 together coordinate dimethylallyl diphosphate. Isopentenyl diphosphate-binding residues include serine 232, serine 233, asparagine 234, and serine 277.

Belongs to the IspH family. Requires [4Fe-4S] cluster as cofactor.

The enzyme catalyses isopentenyl diphosphate + 2 oxidized [2Fe-2S]-[ferredoxin] + H2O = (2E)-4-hydroxy-3-methylbut-2-enyl diphosphate + 2 reduced [2Fe-2S]-[ferredoxin] + 2 H(+). The catalysed reaction is dimethylallyl diphosphate + 2 oxidized [2Fe-2S]-[ferredoxin] + H2O = (2E)-4-hydroxy-3-methylbut-2-enyl diphosphate + 2 reduced [2Fe-2S]-[ferredoxin] + 2 H(+). The protein operates within isoprenoid biosynthesis; dimethylallyl diphosphate biosynthesis; dimethylallyl diphosphate from (2E)-4-hydroxy-3-methylbutenyl diphosphate: step 1/1. It participates in isoprenoid biosynthesis; isopentenyl diphosphate biosynthesis via DXP pathway; isopentenyl diphosphate from 1-deoxy-D-xylulose 5-phosphate: step 6/6. Its function is as follows. Catalyzes the conversion of 1-hydroxy-2-methyl-2-(E)-butenyl 4-diphosphate (HMBPP) into a mixture of isopentenyl diphosphate (IPP) and dimethylallyl diphosphate (DMAPP). Acts in the terminal step of the DOXP/MEP pathway for isoprenoid precursor biosynthesis. This is 4-hydroxy-3-methylbut-2-enyl diphosphate reductase from Bartonella henselae (strain ATCC 49882 / DSM 28221 / CCUG 30454 / Houston 1) (Rochalimaea henselae).